We begin with the raw amino-acid sequence, 464 residues long: 3-isopropylmalate dehydratase large subunit (464 aa).

[4Fe-4S] cluster contacts are provided by cysteine 345, cysteine 405, and cysteine 408.

The protein belongs to the aconitase/IPM isomerase family. LeuC type 1 subfamily. Heterodimer of LeuC and LeuD. [4Fe-4S] cluster is required as a cofactor.

The enzyme catalyses (2R,3S)-3-isopropylmalate = (2S)-2-isopropylmalate. It functions in the pathway amino-acid biosynthesis; L-leucine biosynthesis; L-leucine from 3-methyl-2-oxobutanoate: step 2/4. Functionally, catalyzes the isomerization between 2-isopropylmalate and 3-isopropylmalate, via the formation of 2-isopropylmaleate. The protein is 3-isopropylmalate dehydratase large subunit of Flavobacterium johnsoniae (strain ATCC 17061 / DSM 2064 / JCM 8514 / BCRC 14874 / CCUG 350202 / NBRC 14942 / NCIMB 11054 / UW101) (Cytophaga johnsonae).